Consider the following 158-residue polypeptide: SsrA-binding protein (158 aa).

Belongs to the SmpB family.

It localises to the cytoplasm. Functionally, required for rescue of stalled ribosomes mediated by trans-translation. Binds to transfer-messenger RNA (tmRNA), required for stable association of tmRNA with ribosomes. tmRNA and SmpB together mimic tRNA shape, replacing the anticodon stem-loop with SmpB. tmRNA is encoded by the ssrA gene; the 2 termini fold to resemble tRNA(Ala) and it encodes a 'tag peptide', a short internal open reading frame. During trans-translation Ala-aminoacylated tmRNA acts like a tRNA, entering the A-site of stalled ribosomes, displacing the stalled mRNA. The ribosome then switches to translate the ORF on the tmRNA; the nascent peptide is terminated with the 'tag peptide' encoded by the tmRNA and targeted for degradation. The ribosome is freed to recommence translation, which seems to be the essential function of trans-translation. In Chloroflexus aggregans (strain MD-66 / DSM 9485), this protein is SsrA-binding protein.